Consider the following 214-residue polypeptide: uncharacterized protein (214 aa).

2 CBS domains span residues 7 to 65 and 69 to 129; these read MDKN…KKPI and MRPV…EIPV.

This is an uncharacterized protein from Methanocaldococcus jannaschii (strain ATCC 43067 / DSM 2661 / JAL-1 / JCM 10045 / NBRC 100440) (Methanococcus jannaschii).